Consider the following 133-residue polypeptide: uncharacterized protein (133 aa).

The tract at residues 44–79 (VENQLASSKTEEQTLKISKKSNLNPAQKSSTFGLEN) is disordered. Polar residues predominate over residues 63–79 (KSNLNPAQKSSTFGLEN).

The protein localises to the plastid. It is found in the chloroplast. This is an uncharacterized protein from Chlorella vulgaris (Green alga).